A 1121-amino-acid chain; its full sequence is Putative ATP-dependent RNA helicase ECM32 (1121 aa).

The disordered stretch occupies residues 157–187 (NSTRKPRKKGGRRVGRGKKGRKGAKIKKEKK). The span at 160–184 (RKPRKKGGRRVGRGKKGRKGAKIKK) shows a compositional bias: basic residues. S227 carries the post-translational modification Phosphoserine. A disordered region spans residues 233–452 (AKVSKSETSR…NQEKNNGKTK (220 aa)). Residues 251–263 (NKGKGNKANHKKN) show a composition bias toward basic residues. A compositionally biased stretch (polar residues) spans 278–287 (IRNNVRNSQP). A compositionally biased stretch (basic and acidic residues) spans 307 to 316 (GKNESVDKHQ). Residues 323–336 (LNGNGSGSTNTTGL) show a composition bias toward low complexity. The span at 342–363 (DHAGQKTKGNDKTGNKNPREAK) shows a compositional bias: basic and acidic residues. Positions 376-413 (KSNNQPNKGTSRWTIGSDTESSREPSISPNENTTSITK) are enriched in polar residues. Residue S392 is modified to Phosphoserine. Residues 426–452 (LNEKSKTTTMPKKLETKNQEKNNGKTK) show a composition bias toward basic and acidic residues. Residue T465 is modified to Phosphothreonine. 670-677 (GPPGTGKT) is an ATP binding site.

It belongs to the DNA2/NAM7 helicase family. As to quaternary structure, interacts with the peptidyl release factors SUP35 and weakly with SUP45.

It localises to the cytoplasm. It catalyses the reaction ATP + H2O = ADP + phosphate + H(+). Its function is as follows. Probable RNA helicase, which may be involved in modulation of the translation termination process. Probably unwinds double-stranded RNA. In vitro, unwinds covalently closed, circular DNA in the presence of a DNA topoisomerase TOP1 and replication factor-A protein RFA1. This is Putative ATP-dependent RNA helicase ECM32 (ECM32) from Saccharomyces cerevisiae (strain ATCC 204508 / S288c) (Baker's yeast).